A 424-amino-acid chain; its full sequence is ATP-citrate synthase alpha chain protein 3 (424 aa).

Citrate-binding residues include N343, T345, and R376.

This sequence belongs to the succinate/malate CoA ligase beta subunit family. Heterooctamer of 4 alpha and 4 beta chains.

It localises to the cytoplasm. It is found in the cytosol. It catalyses the reaction oxaloacetate + acetyl-CoA + ADP + phosphate = citrate + ATP + CoA. In terms of biological role, ATP citrate-lyase is the primary enzyme responsible for the synthesis of cytosolic acetyl-CoA, used for the elongation of fatty acids and biosynthesis of isoprenoids, flavonoids and malonated derivatives. May supply substrate to the cytosolic acetyl-CoA carboxylase, which generates the malonyl-CoA used for the synthesis of a multitude of compounds, including very long chain fatty acids and flavonoids. Required for normal growth and development and elongation of C18 fatty acids to C20 to C24 fatty acids in seeds. In contrast to all known animal ACL enzymes having a homomeric structure, plant ACLs are composed of alpha and beta chains. The chain is ATP-citrate synthase alpha chain protein 3 (ACLA-3) from Arabidopsis thaliana (Mouse-ear cress).